Reading from the N-terminus, the 156-residue chain is MGKRESYEAKTTELIQPVVEANGVELFDVDYVKEGSDWYLRVYIDKEGGVTIDDCQNVSRAFNEILDRENYIDDQYIFEVSSPGLTRPLKKEKDYEKSIGRMIEIKLFSPVDKSKEYSGVLKEYDKDTVTISIDDVTKTFDRSNLAMIRWAFVDEV.

The protein belongs to the RimP family.

Its subcellular location is the cytoplasm. Required for maturation of 30S ribosomal subunits. This chain is Ribosome maturation factor RimP, found in Lachnospira eligens (strain ATCC 27750 / DSM 3376 / VPI C15-48 / C15-B4) (Eubacterium eligens).